A 148-amino-acid chain; its full sequence is MALLCFNSLPSLSSLSSSSSSRLLQSPSFASPVLSLKPNAVESKNRVSLSAYSLNSSHGRIVVKAAASGVDGAEPESKEEPKTVVAAVPVDKLPLESKEAKEKLLLELRLKMKLAKKIRLRRKRLVRKRKMRKKGRWPPSKMKKNKNV.

Residues 1–65 (MALLCFNSLP…SSHGRIVVKA (65 aa)) constitute a chloroplast transit peptide. Residue alanine 66 is modified to N-acetylalanine. Positions 125 to 148 (LVRKRKMRKKGRWPPSKMKKNKNV) are disordered.

Belongs to the chloroplast-specific ribosomal protein cL37 family. Part of the 50S ribosomal subunit.

It is found in the plastid. The protein resides in the chloroplast. The sequence is that of Large ribosomal subunit protein cL37 (PSRP5) from Arabidopsis thaliana (Mouse-ear cress).